Here is a 756-residue protein sequence, read N- to C-terminus: ATP-dependent zinc metalloprotease FtsH (756 aa).

At Met1–Ser44 the chain is on the cytoplasmic side. The helical transmembrane segment at Trp45–Thr65 threads the bilayer. Residues Gln66–Ser148 lie on the Extracellular side of the membrane. Residues Phe149 to Phe169 traverse the membrane as a helical segment. Residues Leu170–Gly756 are Cytoplasmic-facing. An ATP-binding site is contributed by Gly241–Thr248. His463 contributes to the Zn(2+) binding site. Glu464 is a catalytic residue. Residues His467 and Asp539 each contribute to the Zn(2+) site. Basic and acidic residues-rich tracts occupy residues Pro647–Asp662 and Leu672–Glu681. A disordered region spans residues Pro647–Gly756. 2 stretches are compositionally biased toward low complexity: residues Ala684–Ala703 and Pro713–Ala724. Residues Gly744–Gly756 are compositionally biased toward polar residues.

In the central section; belongs to the AAA ATPase family. This sequence in the C-terminal section; belongs to the peptidase M41 family. In terms of assembly, homohexamer. Requires Zn(2+) as cofactor.

Its subcellular location is the cell membrane. Functionally, acts as a processive, ATP-dependent zinc metallopeptidase for both cytoplasmic and membrane proteins. Plays a role in the quality control of integral membrane proteins. This is ATP-dependent zinc metalloprotease FtsH from Rothia mucilaginosa (strain DY-18) (Stomatococcus mucilaginosus).